A 67-amino-acid chain; its full sequence is MSDARITELETKLIFAEDLIETLNQTVIRQQAQLDQIQQQLRLLHRQLQDALAREAPAPGNEPPPHY.

It belongs to the SlyX family.

The polypeptide is Protein SlyX homolog (Thiobacillus denitrificans (strain ATCC 25259 / T1)).